The chain runs to 422 residues: IMP-specific 5'-nucleotidase 1 (422 aa).

Arg-106 and His-124 together coordinate ATP. Asp-146 serves as the catalytic Nucleophile. Residues Asp-146, Asp-148, Asp-154, Thr-182, Asp-348, and Lys-356 each coordinate IMP. The Mg(2+) site is built by Asp-146 and Asp-148. Catalysis depends on Asp-148, which acts as the Proton donor. A Mg(2+)-binding site is contributed by Asp-383.

This sequence belongs to the ISN1 family. In terms of assembly, homotetramer. The cofactor is Mg(2+).

The catalysed reaction is IMP + H2O = inosine + phosphate. Its activity is regulated as follows. Allosterically activated by ATP. ATP binding is a prerequisite to magnesium and substrate binding. ATP binds to 2 of the subunits in the homotetramer inducing a closure of these 2 subunits and the release of the C-terminal loop, thereby activating the enzyme. Functionally, IMP-specific 5'-nucleotidase involved in IMP (inositol monophosphate) degradation. This chain is IMP-specific 5'-nucleotidase 1 (ISN1), found in Kluyveromyces lactis (strain ATCC 8585 / CBS 2359 / DSM 70799 / NBRC 1267 / NRRL Y-1140 / WM37) (Yeast).